Reading from the N-terminus, the 710-residue chain is DNA polymerase epsilon subunit B (710 aa).

A disordered region spans residues 116–167 (FLKRPNSPTDTEITTLSQGSATSVVNPDSHSPMMLEEGSPINSDSEPISEHE). Positions 121 to 144 (NSPTDTEITTLSQGSATSVVNPDS) are enriched in polar residues.

The protein belongs to the DNA polymerase epsilon subunit B family. Heterotetramer. Consists of four subunits: POL2, DPB2, DPB3 and DPB4.

The protein localises to the nucleus. In terms of biological role, as accessory component of the DNA polymerase epsilon (DNA polymerase II) participates in chromosomal DNA replication. This chain is DNA polymerase epsilon subunit B (DPB2), found in Kluyveromyces lactis (strain ATCC 8585 / CBS 2359 / DSM 70799 / NBRC 1267 / NRRL Y-1140 / WM37) (Yeast).